Here is a 411-residue protein sequence, read N- to C-terminus: Serine/threonine-protein kinase 54 (411 aa).

A phosphoserine; by PHOT1 mark is found at serine 43 and serine 45. The Protein kinase domain maps to 108-385 (LIIKSVIARG…EEVVAMLEAI (278 aa)). Residues 114–122 (IARGTFGTV) and lysine 135 each bind ATP. The active-site Proton acceptor is the aspartate 253. Threonine 286 carries the post-translational modification Phosphothreonine.

It belongs to the protein kinase superfamily. Ser/Thr protein kinase family. In terms of assembly, binds to CBC2. Associates with PHOT2, BLUS1 and PM H(+)-ATPase (e.g. AHA1). Autophosphorylated. Phosphorylated in guard cells by HT1 in response to low CO(2) concentrations and by PHOT1 after blue light (BL) exposure. In terms of tissue distribution, expressed in guard cells.

Its subcellular location is the cytoplasm. It localises to the cytosol. It carries out the reaction L-seryl-[protein] + ATP = O-phospho-L-seryl-[protein] + ADP + H(+). It catalyses the reaction L-threonyl-[protein] + ATP = O-phospho-L-threonyl-[protein] + ADP + H(+). Serine/threonine protein kinase that phosphorylates proteins on serine and threonine residues. Collectively with CBC2, acts as a negative regulator of stomatal opening, probably via the inhibition of plasma membrane-type ATPases (AHA1 and AHA2) activity in guard cells, but in an abscisic acid (ABA)-independent manner. However, at low concentrations of CO(2), together with CBC2, stimulates stomatal opening via the inhibition of S-type anion channels in response to blue light (BL) and red light (RL), thus being a key component to maximize photosynthesis in the light under low CO(2) conditions. Required for temperature decrease in leaves. Downstream target of HIGH LEAF TEMPERATURE1 (HT1) during low CO(2)-induced stomatal opening. Also functions in the signaling pathways of phototropins. This is Serine/threonine-protein kinase 54 from Arabidopsis thaliana (Mouse-ear cress).